The following is a 197-amino-acid chain: Potassium-transporting ATPase KdpC subunit (197 aa).

The chain crosses the membrane as a helical span at residues 9–29 (LVVTLLLAALLCGAYPVLVTG).

The protein belongs to the KdpC family. In terms of assembly, the system is composed of three essential subunits: KdpA, KdpB and KdpC.

It is found in the cell inner membrane. Its function is as follows. Part of the high-affinity ATP-driven potassium transport (or Kdp) system, which catalyzes the hydrolysis of ATP coupled with the electrogenic transport of potassium into the cytoplasm. This subunit acts as a catalytic chaperone that increases the ATP-binding affinity of the ATP-hydrolyzing subunit KdpB by the formation of a transient KdpB/KdpC/ATP ternary complex. The protein is Potassium-transporting ATPase KdpC subunit of Nitratidesulfovibrio vulgaris (strain DSM 19637 / Miyazaki F) (Desulfovibrio vulgaris).